The following is a 740-amino-acid chain: Protein SMY2 (740 aa).

Residues Ser12 and Ser96 each carry the phosphoserine modification. Thr129 bears the Phosphothreonine mark. Residues 205–261 enclose the GYF domain; that stretch reads ESSWRYIDTQGQIHGPFTTQMMSQWYIGGYFASTLQISRLGSTPETLGINDIFITLG. Thr311 carries the phosphothreonine modification. 3 disordered regions span residues 346 to 510, 523 to 548, and 567 to 592; these read ISQT…KEEL, PSNQ…SPLK, and QSSS…VTSK. Residues 364-439 show a composition bias toward basic and acidic residues; sequence EKGKKEKSES…KKSEKTKKDT (76 aa). Residues 369–440 are a coiled coil; it reads EKSESVAKAL…KSEKTKKDTQ (72 aa). Positions 452–467 are enriched in low complexity; sequence LPSLNSSSANPAPWAS. Positions 474 to 486 are enriched in polar residues; the sequence is AIETSIKNGVSST. Residues 500 to 510 are compositionally biased toward basic and acidic residues; the sequence is NSKEEKQKEEL. Residues 523–536 are compositionally biased toward polar residues; it reads PSNQTIDIKSQFQK. At Ser545 the chain carries Phosphoserine. At Ser602 the chain carries Phosphoserine.

This sequence belongs to the SMY2/mpd2 family. As to quaternary structure, interacts with EAP1 and MSL5 (via the GYP domain).

The protein localises to the cytoplasm. Suppressor of the MYO2 gene. This chain is Protein SMY2 (SMY2), found in Saccharomyces cerevisiae (strain ATCC 204508 / S288c) (Baker's yeast).